Reading from the N-terminus, the 183-residue chain is Translation initiation factor IF-3 (183 aa).

Belongs to the IF-3 family. In terms of assembly, monomer.

Its subcellular location is the cytoplasm. In terms of biological role, IF-3 binds to the 30S ribosomal subunit and shifts the equilibrium between 70S ribosomes and their 50S and 30S subunits in favor of the free subunits, thus enhancing the availability of 30S subunits on which protein synthesis initiation begins. This chain is Translation initiation factor IF-3, found in Pseudomonas fluorescens (strain SBW25).